Reading from the N-terminus, the 175-residue chain is Peptide deformylase (175 aa).

Residues Cys-96 and His-138 each contribute to the Fe cation site. Glu-139 is an active-site residue. His-142 is a binding site for Fe cation.

It belongs to the polypeptide deformylase family. Fe(2+) is required as a cofactor.

It catalyses the reaction N-terminal N-formyl-L-methionyl-[peptide] + H2O = N-terminal L-methionyl-[peptide] + formate. In terms of biological role, removes the formyl group from the N-terminal Met of newly synthesized proteins. Requires at least a dipeptide for an efficient rate of reaction. N-terminal L-methionine is a prerequisite for activity but the enzyme has broad specificity at other positions. This Campylobacter jejuni subsp. jejuni serotype O:2 (strain ATCC 700819 / NCTC 11168) protein is Peptide deformylase.